Consider the following 357-residue polypeptide: DNA replication and repair protein RecF (357 aa).

30–37 contributes to the ATP binding site; it reads GANGSGKT.

The protein belongs to the RecF family.

The protein localises to the cytoplasm. Its function is as follows. The RecF protein is involved in DNA metabolism; it is required for DNA replication and normal SOS inducibility. RecF binds preferentially to single-stranded, linear DNA. It also seems to bind ATP. This chain is DNA replication and repair protein RecF, found in Shigella boydii serotype 4 (strain Sb227).